The chain runs to 544 residues: Chaperonin GroEL (544 aa).

ATP is bound by residues 30-33, lysine 51, 87-91, glycine 415, and aspartate 495; these read TLGP and DGTTT.

The protein belongs to the chaperonin (HSP60) family. In terms of assembly, forms a cylinder of 14 subunits composed of two heptameric rings stacked back-to-back. Interacts with the co-chaperonin GroES.

It is found in the cytoplasm. It carries out the reaction ATP + H2O + a folded polypeptide = ADP + phosphate + an unfolded polypeptide.. Functionally, together with its co-chaperonin GroES, plays an essential role in assisting protein folding. The GroEL-GroES system forms a nano-cage that allows encapsulation of the non-native substrate proteins and provides a physical environment optimized to promote and accelerate protein folding. This chain is Chaperonin GroEL, found in Aeromonas salmonicida (strain A449).